The chain runs to 135 residues: Large-conductance mechanosensitive channel (135 aa).

Transmembrane regions (helical) follow at residues 9 to 29 and 79 to 99; these read AFAA…GAAF and IQTI…LKAI.

Belongs to the MscL family. In terms of assembly, homopentamer.

The protein resides in the cell inner membrane. Channel that opens in response to stretch forces in the membrane lipid bilayer. May participate in the regulation of osmotic pressure changes within the cell. This chain is Large-conductance mechanosensitive channel, found in Aeromonas salmonicida (strain A449).